The sequence spans 80 residues: Caltrin (80 aa).

An N-terminal signal peptide occupies residues 1–32 (MMAGRRSWPAMATVLLALLVCLGELVDSKPQP).

In terms of biological role, inhibits calcium transport into spermatozoa; it does not bind directly to calcium. Binds to calmodulin. Inhibits the growth of microorganisms. Seem to act as an antibiotic by permeabilizing the bacterial membrane. This chain is Caltrin (PYY2), found in Bos taurus (Bovine).